The chain runs to 367 residues: Probable L-aspartate decarboxylase (367 aa).

Lys-216 is subject to N6-(pyridoxal phosphate)lysine.

It belongs to the group II decarboxylase family. MfnA subfamily. Pyridoxal 5'-phosphate serves as cofactor.

The enzyme catalyses L-aspartate + H(+) = beta-alanine + CO2. Its pathway is cofactor biosynthesis; coenzyme A biosynthesis. Its function is as follows. Catalyzes the decarboxylation of L-aspartate to produce beta-alanine. This is Probable L-aspartate decarboxylase from Archaeoglobus fulgidus (strain ATCC 49558 / DSM 4304 / JCM 9628 / NBRC 100126 / VC-16).